A 153-amino-acid chain; its full sequence is uncharacterized protein (153 aa).

Residues 1–19 (MRKYIPLVLFIFSWPVLCA) form the signal peptide. Catalysis depends on residues Arg-46, Glu-54, and Arg-88.

The protein belongs to the thermonuclease family.

This is an uncharacterized protein from Escherichia coli O157:H7.